A 198-amino-acid polypeptide reads, in one-letter code: UPF0215 protein NEQ431 (198 aa).

Residues 179-198 (TKGDSSKPRAGGDSNPGPAG) form a disordered region.

It belongs to the UPF0215 family.

In Nanoarchaeum equitans (strain Kin4-M), this protein is UPF0215 protein NEQ431.